We begin with the raw amino-acid sequence, 305 residues long: Tyrosine recombinase XerD (305 aa).

A Core-binding (CB) domain is found at 1-83 (MEFISQFLEM…TIKSYYEFLI (83 aa)). The Tyr recombinase domain maps to 104 to 298 (KLPEILSIDD…QTNHLKKALL (195 aa)). Catalysis depends on residues arginine 145, lysine 175, histidine 250, arginine 253, and histidine 276. The O-(3'-phospho-DNA)-tyrosine intermediate role is filled by tyrosine 285.

This sequence belongs to the 'phage' integrase family. XerD subfamily. Forms a cyclic heterotetrameric complex composed of two molecules of XerC and two molecules of XerD.

It localises to the cytoplasm. In terms of biological role, site-specific tyrosine recombinase, which acts by catalyzing the cutting and rejoining of the recombining DNA molecules. The XerC-XerD complex is essential to convert dimers of the bacterial chromosome into monomers to permit their segregation at cell division. It also contributes to the segregational stability of plasmids. This Rickettsia bellii (strain RML369-C) protein is Tyrosine recombinase XerD.